The sequence spans 1238 residues: DNA-directed RNA polymerase subunit beta (1238 aa).

A disordered region spans residues 1186–1238 (IEGREDTPPEEVYEEGYEEGFEEESEELPEDIDFEPDSFDIENDDLDLEDFDI). Residues 1193–1238 (PPEEVYEEGYEEGFEEESEELPEDIDFEPDSFDIENDDLDLEDFDI) show a composition bias toward acidic residues.

Belongs to the RNA polymerase beta chain family. As to quaternary structure, the RNAP catalytic core consists of 2 alpha, 1 beta, 1 beta' and 1 omega subunit. When a sigma factor is associated with the core the holoenzyme is formed, which can initiate transcription.

The enzyme catalyses RNA(n) + a ribonucleoside 5'-triphosphate = RNA(n+1) + diphosphate. Functionally, DNA-dependent RNA polymerase catalyzes the transcription of DNA into RNA using the four ribonucleoside triphosphates as substrates. The polypeptide is DNA-directed RNA polymerase subunit beta (Thermoanaerobacter sp. (strain X514)).